Consider the following 636-residue polypeptide: Poly(3-hydroxyalkanoate) polymerase subunit PhaC (636 aa).

2 disordered regions span residues 1 to 38 (MYNK…DATD) and 129 to 152 (QGTR…KRFS). Positions 143-152 (PDTRKDKRFS) are enriched in basic and acidic residues. C373 is a catalytic residue.

This sequence belongs to the PHA/PHB synthase family. Type I PhaC subfamily.

The protein localises to the cytoplasm. It carries out the reaction (3R)-3-hydroxybutanoyl-CoA + [(3R)-hydroxybutanoate](n) = [(3R)-hydroxybutanoate](n+1) + CoA. The protein operates within biopolymer metabolism; poly-(R)-3-hydroxybutanoate biosynthesis. Polymerizes D(-)-3-hydroxybutyryl-CoA to create PHB which consists of thousands of hydroxybutyrate molecules linked end to end. PHB serves as an intracellular energy reserve material when cells grow under conditions of nutrient limitation. This chain is Poly(3-hydroxyalkanoate) polymerase subunit PhaC, found in Rhizobium etli (strain ATCC 51251 / DSM 11541 / JCM 21823 / NBRC 15573 / CFN 42).